A 302-amino-acid chain; its full sequence is Segregation and condensation protein A (302 aa).

This sequence belongs to the ScpA family. In terms of assembly, component of a cohesin-like complex composed of ScpA, ScpB and the Smc homodimer, in which ScpA and ScpB bind to the head domain of Smc. The presence of the three proteins is required for the association of the complex with DNA.

The protein resides in the cytoplasm. Its function is as follows. Participates in chromosomal partition during cell division. May act via the formation of a condensin-like complex containing Smc and ScpB that pull DNA away from mid-cell into both cell halves. The sequence is that of Segregation and condensation protein A from Xylella fastidiosa (strain 9a5c).